The sequence spans 299 residues: Bifunctional protein FolD 1 (299 aa).

NADP(+) is bound by residues 168-170, serine 193, and isoleucine 234; that span reads GRS.

The protein belongs to the tetrahydrofolate dehydrogenase/cyclohydrolase family. As to quaternary structure, homodimer.

It catalyses the reaction (6R)-5,10-methylene-5,6,7,8-tetrahydrofolate + NADP(+) = (6R)-5,10-methenyltetrahydrofolate + NADPH. It carries out the reaction (6R)-5,10-methenyltetrahydrofolate + H2O = (6R)-10-formyltetrahydrofolate + H(+). It participates in one-carbon metabolism; tetrahydrofolate interconversion. Its function is as follows. Catalyzes the oxidation of 5,10-methylenetetrahydrofolate to 5,10-methenyltetrahydrofolate and then the hydrolysis of 5,10-methenyltetrahydrofolate to 10-formyltetrahydrofolate. The chain is Bifunctional protein FolD 1 from Rhizobium etli (strain ATCC 51251 / DSM 11541 / JCM 21823 / NBRC 15573 / CFN 42).